The sequence spans 425 residues: Histone-binding protein RBBP4 (425 aa).

A2 is subject to N-acetylalanine. N6-acetyllysine; alternate is present on K4. K4 participates in a covalent cross-link: Glycyl lysine isopeptide (Lys-Gly) (interchain with G-Cter in SUMO2); alternate. K4 participates in a covalent cross-link: Glycyl lysine isopeptide (Lys-Gly) (interchain with G-Cter in ubiquitin); alternate. WD repeat units lie at residues 32–125, 126–175, 176–223, 225–270, 271–314, 315–371, and 372–404; these read YDLV…NHEG, EVNR…RLRG, HQKE…KTIF, GHTA…HSVD, AHTA…HSFE, SHKD…FIHG, and GHTA…VWQM. Position 110 is a phosphoserine (S110). At K160 the chain carries N6-acetyllysine; alternate. K160 participates in a covalent cross-link: Glycyl lysine isopeptide (Lys-Gly) (interchain with G-Cter in SUMO2); alternate. S355 bears the Phosphoserine mark.

It belongs to the WD repeat RBAP46/RBAP48/MSI1 family. Binds directly to helix 1 of the histone fold of histone H4, a region that is not accessible when H4 is in chromatin. Subunit of the chromatin assembly factor 1 (CAF-1) complex, which is composed of RBBP4, CHAF1B and CHAF1A. Subunit of the core histone deacetylase (HDAC) complex, which is composed of HDAC1, HDAC2, RBBP4 and RBBP7. The core HDAC complex associates with SIN3A, ARID4B/SAP180, SAP18, SAP30, SAP130, SUDS3/SAP45 and possibly ARID4A/RBP1 and ING1 to form the SIN3 HDAC complex. Component of the nucleosome remodeling and deacetylase (NuRD) repressor complex, composed of core proteins MTA1, MTA2, MTA3, RBBP4, RBBP7, HDAC1, HDAC2, MBD2, MBD3, and peripherally associated proteins CDK2AP1, CDK2AP2, GATAD2A, GATAD2B, CHD3, CHD4 and CHD5. The exact stoichiometry of the NuRD complex is unknown, and some subunits such as MBD2 and MBD3, GATAD2A and GATAD2B, and CHD3, CHD4 and CHD5 define mutually exclusive NuRD complexes. Interacts with ZNF512B; the interaction is direct and may play a role in repressing gene expression. The NuRD complex may also interact with MBD3L1 and MBD3L2. Component of the PRC2 complex, which consists of the core subunits EED, EZH1 or EZH2, SUZ12, and RBBP4, and various combinations of accessory subunits including AEBP2, JARID2, PHF19, MTF2 and EPOP. Forms a monomeric PRC2.2 (class 2) complex consisting of at least SUZ12, RBBP4, AEBP2 and JARID2. Forms a dimeric PRC2.1 (class 1, PRC-PCL) complex consisting of at least SUZ12, RBBP4, and PHF19; PHF19 stabilizes the dimeric structure which enhances PRC2 interaction with chromatin. Component of the NURF-1 ISWI chromatin remodeling complex (also called the nucleosome-remodeling factor (NURF) complex) at least composed of SMARCA1 (isoform 2), BPTF, RBBP4 and RBBP7. Within the complex interacts with isoform 2 of SMARCA1. Component of the BPFT-SMARCA1 complex at least composed of SMARCA1 (isoform 1), BPFT, RBBP4 and RBBP7; the complex is catalytically inactive and does not remodel chromatin. Within the complex interacts with isoform 1 of SMARCA1. Interacts with the ISWI chromatin remodeling complex component SMARCA5; the interaction is direct. Interacts with the viral protein-binding domain of the retinoblastoma protein (RB1). Component of the DREAM complex (also named LINC complex) at least composed of E2F4, E2F5, LIN9, LIN37, LIN52, LIN54, MYBL1, MYBL2, RBL1, RBL2, RBBP4, TFDP1 and TFDP2. The complex exists in quiescent cells where it represses cell cycle-dependent genes. It dissociates in S phase when LIN9, LIN37, LIN52 and LIN54 form a subcomplex that binds to MYBL2. Found in a complex composed of at least SINHCAF, SIN3A, HDAC1, SAP30, RBBP4, OGT and TET1. Interacts with ZNF827; the interaction is direct and recruits RBBP4 to telomeres. Interacts with MTA1; the interaction is direct and mutually exclusive with binding histone H4. Interacts with ARMC12 (via ARM domains). Interacts with BRCA1. Interacts with CDK2AP1. Interacts with CREBBP, and this interaction may be enhanced by the binding of phosphorylated CREB1 to CREBBP. Interacts with ERCC6. Interacts with HDAC7. Interacts with PHF6. Interacts with PWWP2B. Interacts with SPEN/MINT. Interacts with SUV39H1.

The protein localises to the nucleus. The protein resides in the chromosome. Its subcellular location is the telomere. Functionally, core histone-binding subunit that may target chromatin assembly factors, chromatin remodeling factors and histone deacetylases to their histone substrates in a manner that is regulated by nucleosomal DNA. Component of the chromatin assembly factor 1 (CAF-1) complex, which is required for chromatin assembly following DNA replication and DNA repair. Component of the core histone deacetylase (HDAC) complex, which promotes histone deacetylation and consequent transcriptional repression. Component of the nucleosome remodeling and histone deacetylase complex (the NuRD complex), which promotes transcriptional repression by histone deacetylation and nucleosome remodeling. Component of the PRC2 complex, which promotes repression of homeotic genes during development. Component of the NURF (nucleosome remodeling factor) complex. In Bos taurus (Bovine), this protein is Histone-binding protein RBBP4 (RBBP4).